The sequence spans 200 residues: Large ribosomal subunit protein uL18 (200 aa).

The protein belongs to the universal ribosomal protein uL18 family. Part of the 50S ribosomal subunit. Contacts the 5S and 23S rRNAs.

Its function is as follows. This is one of the proteins that bind and probably mediate the attachment of the 5S RNA into the large ribosomal subunit, where it forms part of the central protuberance. In Thermococcus sibiricus (strain DSM 12597 / MM 739), this protein is Large ribosomal subunit protein uL18.